The following is a 350-amino-acid chain: Alcohol dehydrogenase 1 (350 aa).

Residues cysteine 46, histidine 69, cysteine 100, cysteine 103, cysteine 106, cysteine 114, and cysteine 156 each contribute to the Zn(2+) site. Residues 180 to 186 (GAAGGLG), aspartate 204, lysine 209, 271 to 273 (VGL), and arginine 343 each bind NAD(+).

This sequence belongs to the zinc-containing alcohol dehydrogenase family. As to quaternary structure, homotetramer. Zn(2+) is required as a cofactor.

The protein resides in the cytoplasm. It catalyses the reaction a primary alcohol + NAD(+) = an aldehyde + NADH + H(+). It carries out the reaction a secondary alcohol + NAD(+) = a ketone + NADH + H(+). The sequence is that of Alcohol dehydrogenase 1 (ADH1) from Kluyveromyces lactis (strain ATCC 8585 / CBS 2359 / DSM 70799 / NBRC 1267 / NRRL Y-1140 / WM37) (Yeast).